The primary structure comprises 415 residues: Adenosylhomocysteinase (415 aa).

The substrate site is built by threonine 53, aspartate 124, and glutamate 147. Residue 148–150 coordinates NAD(+); sequence TTT. Substrate is bound by residues lysine 177 and aspartate 181. NAD(+) contacts are provided by residues asparagine 182, 211-216, glutamate 234, asparagine 269, 290-292, and asparagine 337; these read GYGWVG and SGH.

This sequence belongs to the adenosylhomocysteinase family. NAD(+) serves as cofactor.

It localises to the cytoplasm. The enzyme catalyses S-adenosyl-L-homocysteine + H2O = L-homocysteine + adenosine. Its pathway is amino-acid biosynthesis; L-homocysteine biosynthesis; L-homocysteine from S-adenosyl-L-homocysteine: step 1/1. In terms of biological role, may play a key role in the regulation of the intracellular concentration of adenosylhomocysteine. This chain is Adenosylhomocysteinase, found in Sulfurisphaera tokodaii (strain DSM 16993 / JCM 10545 / NBRC 100140 / 7) (Sulfolobus tokodaii).